A 491-amino-acid chain; its full sequence is Synaptotagmin-9 (491 aa).

Topologically, residues 1-52 are vesicular; sequence MPGARDALCHQALQLLAELCARGALEHDSCQDFIYHLRDRARPRLRDPDISV. A cysteine motif region spans residues 9 to 31; it reads CHQALQLLAELCARGALEHDSCQ. The helical transmembrane segment at 53–73 threads the bilayer; it reads SLLTLVVTACGLALFGVSLFV. Residues 74–491 lie on the Cytoplasmic side of the membrane; sequence SWKLCWVPWR…AHWHSLMEKR (418 aa). Positions 91-104 are enriched in polar residues; it reads SKDNNQEPLNYTDT. Positions 91-147 are disordered; that stretch reads SKDNNQEPLNYTDTETNEQENSEDFLDPPTPCPDSSMKISHTSPDIPLSTQPGGQEN. Positions 105-116 are enriched in acidic residues; it reads ETNEQENSEDFL. A compositionally biased stretch (polar residues) spans 127 to 144; sequence MKISHTSPDIPLSTQPGG. Serine 177 carries the post-translational modification Phosphoserine. C2 domains follow at residues 220 to 341 and 352 to 485; these read ACGK…ILWK and DLGE…AHWH. Aspartate 251, aspartate 257, aspartate 309, phenylalanine 310, aspartate 311, serine 314, aspartate 317, aspartate 383, aspartate 389, aspartate 443, and aspartate 445 together coordinate Ca(2+).

Belongs to the synaptotagmin family. Homodimer; disulfide-linked via the cysteine motif. Can also form heterodimers with SYT3, SYT6, SYT7 and SYT10. Interacts with DNAJC5 and SNAP25, but not with HSC70. The interaction with DNAJC5 is stimulated tenfold in presence of calcium while the interaction with SNAP25 is inhibited. Ca(2+) serves as cofactor.

The protein resides in the cytoplasmic vesicle. The protein localises to the secretory vesicle. Its subcellular location is the synaptic vesicle membrane. May be involved in Ca(2+)-dependent exocytosis of secretory vesicles through Ca(2+) and phospholipid binding to the C2 domain or may serve as Ca(2+) sensors in the process of vesicular trafficking and exocytosis. The protein is Synaptotagmin-9 (Syt9) of Mus musculus (Mouse).